We begin with the raw amino-acid sequence, 352 residues long: Holliday junction branch migration complex subunit RuvB (352 aa).

Positions 5–191 are large ATPase domain (RuvB-L); sequence TDDFSEQRVI…FGIVARLEFY (187 aa). ATP contacts are provided by residues leucine 30, arginine 31, glycine 72, lysine 75, threonine 76, threonine 77, 138 to 140, arginine 181, tyrosine 191, and arginine 228; that span reads EDY. A Mg(2+)-binding site is contributed by threonine 76. The segment at 192–262 is small ATPAse domain (RuvB-S); that stretch reads TPLELTRIVT…MADAALVMLD (71 aa). Residues 265–352 are head domain (RuvB-H); sequence PVGFDVMDRK…GPNGELWGGQ (88 aa). Arginine 301, arginine 320, and arginine 325 together coordinate DNA.

This sequence belongs to the RuvB family. As to quaternary structure, homohexamer. Forms an RuvA(8)-RuvB(12)-Holliday junction (HJ) complex. HJ DNA is sandwiched between 2 RuvA tetramers; dsDNA enters through RuvA and exits via RuvB. An RuvB hexamer assembles on each DNA strand where it exits the tetramer. Each RuvB hexamer is contacted by two RuvA subunits (via domain III) on 2 adjacent RuvB subunits; this complex drives branch migration. In the full resolvosome a probable DNA-RuvA(4)-RuvB(12)-RuvC(2) complex forms which resolves the HJ.

Its subcellular location is the cytoplasm. It catalyses the reaction ATP + H2O = ADP + phosphate + H(+). Functionally, the RuvA-RuvB-RuvC complex processes Holliday junction (HJ) DNA during genetic recombination and DNA repair, while the RuvA-RuvB complex plays an important role in the rescue of blocked DNA replication forks via replication fork reversal (RFR). RuvA specifically binds to HJ cruciform DNA, conferring on it an open structure. The RuvB hexamer acts as an ATP-dependent pump, pulling dsDNA into and through the RuvAB complex. RuvB forms 2 homohexamers on either side of HJ DNA bound by 1 or 2 RuvA tetramers; 4 subunits per hexamer contact DNA at a time. Coordinated motions by a converter formed by DNA-disengaged RuvB subunits stimulates ATP hydrolysis and nucleotide exchange. Immobilization of the converter enables RuvB to convert the ATP-contained energy into a lever motion, pulling 2 nucleotides of DNA out of the RuvA tetramer per ATP hydrolyzed, thus driving DNA branch migration. The RuvB motors rotate together with the DNA substrate, which together with the progressing nucleotide cycle form the mechanistic basis for DNA recombination by continuous HJ branch migration. Branch migration allows RuvC to scan DNA until it finds its consensus sequence, where it cleaves and resolves cruciform DNA. This is Holliday junction branch migration complex subunit RuvB from Herminiimonas arsenicoxydans.